The sequence spans 125 residues: uncharacterized protein (125 aa).

Positions 1–63 (MSQSIEDYLE…YEPYIGITLT (63 aa)) constitute an HTH dtxR-type domain.

This sequence belongs to the DtxR/MntR family.

This is an uncharacterized protein from Methanocaldococcus jannaschii (strain ATCC 43067 / DSM 2661 / JAL-1 / JCM 10045 / NBRC 100440) (Methanococcus jannaschii).